The chain runs to 498 residues: ATP synthase subunit alpha 1 (498 aa).

This sequence belongs to the ATPase alpha/beta chains family. F-type ATPases have 2 components, CF(1) - the catalytic core - and CF(0) - the membrane proton channel. CF(1) has five subunits: alpha(3), beta(3), gamma(1), delta(1), epsilon(1). CF(0) has three main subunits: a(1), b(2) and c(9-12). The alpha and beta chains form an alternating ring which encloses part of the gamma chain. CF(1) is attached to CF(0) by a central stalk formed by the gamma and epsilon chains, while a peripheral stalk is formed by the delta and b chains.

It is found in the cell membrane. The catalysed reaction is ATP + H2O + 4 H(+)(in) = ADP + phosphate + 5 H(+)(out). Functionally, produces ATP from ADP in the presence of a proton gradient across the membrane. The alpha chain is a regulatory subunit. The polypeptide is ATP synthase subunit alpha 1 (Listeria monocytogenes serotype 4b (strain F2365)).